Consider the following 268-residue polypeptide: Universal stress protein MT3220 (268 aa).

Residues Gly13, 107–113 (GSVGLDH), Arg117, and 120–121 (SV) each bind ATP.

It belongs to the universal stress protein A family.

In Mycobacterium tuberculosis (strain CDC 1551 / Oshkosh), this protein is Universal stress protein MT3220.